The primary structure comprises 288 residues: 33 kDa chaperonin (288 aa).

Intrachain disulfides connect C235/C237 and C268/C271.

The protein belongs to the HSP33 family. In terms of processing, under oxidizing conditions two disulfide bonds are formed involving the reactive cysteines. Under reducing conditions zinc is bound to the reactive cysteines and the protein is inactive.

The protein localises to the cytoplasm. Its function is as follows. Redox regulated molecular chaperone. Protects both thermally unfolding and oxidatively damaged proteins from irreversible aggregation. Plays an important role in the bacterial defense system toward oxidative stress. The chain is 33 kDa chaperonin from Streptococcus thermophilus (strain CNRZ 1066).